The primary structure comprises 457 residues: Metacaspase-1 (457 aa).

Residues 1-149 (MSWNQYPGGG…PQLQGQGGQS (149 aa)) are disordered. Positions 7–18 (PGGGHHQQGGYG) are enriched in gly residues. The segment covering 20–56 (RPPPPQWAQQGPPPPPNMGYRPPPPPQAYYNNPPPPQ) has biased composition (pro residues). Residues 57 to 83 (QYQRPAPQQNGYQQGGYQQQQQSQGNY) are compositionally biased toward low complexity. Active-site residues include His-247 and Cys-303.

The protein belongs to the peptidase C14B family.

Functionally, involved in cell death (apoptosis). The polypeptide is Metacaspase-1 (MCA1) (Cryptococcus neoformans var. neoformans serotype D (strain JEC21 / ATCC MYA-565) (Filobasidiella neoformans)).